Here is a 156-residue protein sequence, read N- to C-terminus: Dynein 16 kDa light chain, flagellar outer arm (156 aa).

One can recognise a Thioredoxin domain in the interval 2–116; that stretch reads AAGLPPVQYS…LNQQVLSLTP (115 aa). The cysteines at positions 37 and 40 are disulfide-linked.

As to quaternary structure, consists of at least 3 heavy chains (alpha, beta and gamma), 2 intermediate chains and 8 light chains.

The protein localises to the cell projection. It is found in the cilium. Its subcellular location is the flagellum. The protein resides in the cytoplasm. It localises to the cytoskeleton. The protein localises to the flagellum axoneme. Its function is as follows. May be involved in regulating the redox state of functionally important thiol groups within dynein. The polypeptide is Dynein 16 kDa light chain, flagellar outer arm (Chlamydomonas reinhardtii (Chlamydomonas smithii)).